The sequence spans 299 residues: Dihydroorotate dehydrogenase B (NAD(+)), catalytic subunit (299 aa).

FMN is bound by residues Ser21 and Lys44 to Ser45. Substrate contacts are provided by residues Lys44, Asn68–Leu72, and Asn125. Position 125 (Asn125) interacts with FMN. Cys128 functions as the Nucleophile in the catalytic mechanism. FMN is bound at residue Lys163. Asn189–Thr190 contacts substrate. Residues Gly214, Gly240–Gly241, and Gly262–Ser263 contribute to the FMN site.

This sequence belongs to the dihydroorotate dehydrogenase family. Type 1 subfamily. As to quaternary structure, heterotetramer of 2 PyrK and 2 PyrD type B subunits. Requires FMN as cofactor.

Its subcellular location is the cytoplasm. The catalysed reaction is (S)-dihydroorotate + NAD(+) = orotate + NADH + H(+). The protein operates within pyrimidine metabolism; UMP biosynthesis via de novo pathway; orotate from (S)-dihydroorotate (NAD(+) route): step 1/1. In terms of biological role, catalyzes the conversion of dihydroorotate to orotate with NAD(+) as electron acceptor. This is Dihydroorotate dehydrogenase B (NAD(+)), catalytic subunit (pyrD) from Archaeoglobus fulgidus (strain ATCC 49558 / DSM 4304 / JCM 9628 / NBRC 100126 / VC-16).